Here is a 169-residue protein sequence, read N- to C-terminus: Allophycocyanin subunit beta-18 (169 aa).

Asn72 bears the N4-methylasparagine mark. Cys82 is a (2R,3E)-phycocyanobilin binding site.

It belongs to the phycobiliprotein family. In terms of assembly, heterodimer of ApcE and this beta chain. Post-translationally, contains one covalently linked bilin chromophore. The chromophore is added by phycocyanobilin lyase CpcUS.

The protein localises to the cellular thylakoid membrane. A variant beta-allophycocyanin (AP) which forms a complex with ApcE, a phycobilisome terminal emitter that influences energy transfer to photosystem II. The protein is Allophycocyanin subunit beta-18 (apcF) of Picosynechococcus sp. (strain ATCC 27264 / PCC 7002 / PR-6) (Agmenellum quadruplicatum).